Consider the following 637-residue polypeptide: ATP-dependent zinc metalloprotease FtsH (637 aa).

Topologically, residues 1–7 (MNRVFRN) are cytoplasmic. Residues 8–28 (TIFYLLILLVVIGVVSYFQTS) form a helical membrane-spanning segment. At 29 to 109 (NPKTENMSYS…VEPAQETSGW (81 aa)) the chain is on the extracellular side. The chain crosses the membrane as a helical span at residues 110–130 (VTFLTTIIPFVIIFILFFFLL). The Cytoplasmic portion of the chain corresponds to 131–637 (NQAQGGGSRV…TEEKKDDTKE (507 aa)). 201–208 (GPPGTGKT) serves as a coordination point for ATP. H423 is a Zn(2+) binding site. The active site involves E424. 2 residues coordinate Zn(2+): H427 and D499. A not necessary for FtsH function region spans residues 514–637 (FGMSEKLGPL…TEEKKDDTKE (124 aa)).

This sequence in the central section; belongs to the AAA ATPase family. The protein in the C-terminal section; belongs to the peptidase M41 family. In terms of assembly, homohexamer. Interacts with FloT at midcell. Interacts with FloA at midcell. Another study shows only minor colocalization with FloA or FloT. It depends on Zn(2+) as a cofactor.

It is found in the cell membrane. The protein resides in the membrane raft. Acts as a processive, ATP-dependent zinc metallopeptidase for both cytoplasmic and membrane proteins. Plays a role in the quality control of integral membrane proteins. In terms of biological role, in vitro partially degrades Spo0E, the phosphatase that acts on Spo0A-P. Recognition requires the last 14 residues of Spo0E. Its stabile accumulation requires FlotA and Flot. May degrade EzrA. The sequence is that of ATP-dependent zinc metalloprotease FtsH from Bacillus subtilis (strain 168).